Here is a 30-residue protein sequence, read N- to C-terminus: Non-toxic phospholipase A2 (30 aa).

3 residues coordinate Ca(2+): Tyr-26, Gly-28, and Gly-30.

It belongs to the phospholipase A2 family. Group I subfamily. As to quaternary structure, homodimer. Ca(2+) serves as cofactor. Glycosylated. As to expression, expressed by the venom gland.

The protein resides in the secreted. The catalysed reaction is a 1,2-diacyl-sn-glycero-3-phosphocholine + H2O = a 1-acyl-sn-glycero-3-phosphocholine + a fatty acid + H(+). Enzymatic activity is diminished by Cd(2+) and Hg(2+). Functionally, relatively highly potent phospholipase A2 that displays potent antimicrobial and hemolytic activities. It does not show cytotoxic effects on the three human cell lines tested. PLA2 catalyzes the calcium-dependent hydrolysis of the 2-acyl groups in 3-sn-phosphoglycerides. It shows similar potencies on both Gram-negative and Gram-positive bacteria: B.cereus (MIC&gt;9 ug/ml), B.subtilis (MIC&gt;12 ug/ml), E.faecalis (MIC&gt;7 ug/ml), S.epidermidis (MIC&gt;12 ug/ml), S.aureux (MIC&gt;5 ug/ml), E.coli (MIC&gt;7 ug/ml), K.pneumonia (MIC&gt;8 ug/ml), P.aeruginosa (MIC&gt;10 ug/ml), and S.enteric (MIC&gt;9 ug/ml). It also shows antifungal activities: A.niger (MIC&gt;15 ug/ml), B.cinerea (MIC&gt;12 ug/ml), F.solani (MIC&gt;15 ug/ml), and P.digitatum (MIC&gt;10 ug/ml). This is Non-toxic phospholipase A2 from Walterinnesia aegyptia (Desert black snake).